Consider the following 475-residue polypeptide: Ribulose bisphosphate carboxylase large chain (475 aa).

A propeptide spanning residues 1-2 is cleaved from the precursor; sequence MS. The residue at position 3 (proline 3) is an N-acetylproline. The residue at position 14 (lysine 14) is an N6,N6,N6-trimethyllysine. The substrate site is built by asparagine 123 and threonine 173. Lysine 175 functions as the Proton acceptor in the catalytic mechanism. Lysine 177 is a substrate binding site. Residues lysine 201, aspartate 203, and glutamate 204 each contribute to the Mg(2+) site. Lysine 201 is modified (N6-carboxylysine). Histidine 294 serves as the catalytic Proton acceptor. 3 residues coordinate substrate: arginine 295, histidine 327, and serine 379.

This sequence belongs to the RuBisCO large chain family. Type I subfamily. As to quaternary structure, heterohexadecamer of 8 large chains and 8 small chains; disulfide-linked. The disulfide link is formed within the large subunit homodimers. Requires Mg(2+) as cofactor. Post-translationally, the disulfide bond which can form in the large chain dimeric partners within the hexadecamer appears to be associated with oxidative stress and protein turnover.

The protein localises to the plastid. The protein resides in the chloroplast. It carries out the reaction 2 (2R)-3-phosphoglycerate + 2 H(+) = D-ribulose 1,5-bisphosphate + CO2 + H2O. The enzyme catalyses D-ribulose 1,5-bisphosphate + O2 = 2-phosphoglycolate + (2R)-3-phosphoglycerate + 2 H(+). RuBisCO catalyzes two reactions: the carboxylation of D-ribulose 1,5-bisphosphate, the primary event in carbon dioxide fixation, as well as the oxidative fragmentation of the pentose substrate in the photorespiration process. Both reactions occur simultaneously and in competition at the same active site. The chain is Ribulose bisphosphate carboxylase large chain from Mesostigma viride (Green alga).